The chain runs to 1013 residues: Probable beta-galactosidase B (1013 aa).

The first 21 residues, 1–21 (MTRILNCLLVLLACLGVSSKA), serve as a signal peptide directing secretion. Y90 is a substrate binding site. N100 is a glycosylation site (N-linked (GlcNAc...) asparagine). Residues N135, A136, E137, and N195 each contribute to the substrate site. E196 functions as the Proton donor in the catalytic mechanism. N-linked (GlcNAc...) asparagine glycosylation occurs at N211. Y265 contacts substrate. C271 and C324 are oxidised to a cystine. The Nucleophile role is filled by E308. Y373 contacts substrate. 7 N-linked (GlcNAc...) asparagine glycosylation sites follow: N411, N442, N456, N626, N735, N768, and N775.

This sequence belongs to the glycosyl hydrolase 35 family.

The protein localises to the secreted. The catalysed reaction is Hydrolysis of terminal non-reducing beta-D-galactose residues in beta-D-galactosides.. Its function is as follows. Cleaves beta-linked terminal galactosyl residues from gangliosides, glycoproteins, and glycosaminoglycans. The sequence is that of Probable beta-galactosidase B (lacB) from Penicillium rubens (strain ATCC 28089 / DSM 1075 / NRRL 1951 / Wisconsin 54-1255) (Penicillium chrysogenum).